The sequence spans 475 residues: Fez family zinc finger protein 1 (475 aa).

An Engrailed homology 1 repressor motif is present at residues 28–43 (PLAFSIERIMARTPEP). C2H2-type zinc fingers lie at residues 260–282 (FTCE…MPVH), 288–310 (FVCK…KIIH), 316–338 (HKCN…TRIH), 344–366 (FVCE…KLTH), 372–394 (FKCN…MHTH), and 400–423 (FTCP…RKLH). Positions 425 to 475 (SSLGLTRTPTGEPSSDPPPQLQQPPPAPLPPLQPTLPPPGPLPSGLHQGHQ) are disordered. The span at 427–437 (LGLTRTPTGEP) shows a compositional bias: polar residues. The span at 439–466 (SDPPPQLQQPPPAPLPPLQPTLPPPGPL) shows a compositional bias: pro residues.

The protein belongs to the krueppel C2H2-type zinc-finger protein family.

It localises to the nucleus. Transcription repressor. Involved in the axonal projection and proper termination of olfactory sensory neurons (OSN). Plays a role in rostro-caudal patterning of the diencephalon and in prethalamic formation. Expression is required in OSN to cell-autonomously regulate OSN axon projections. Regulates non-cell-autonomously the layer formation of the olfactory bulb development and the interneurons. May be required for correct rostral migration of the interneuron progenitors. This chain is Fez family zinc finger protein 1 (Fezf1), found in Mus musculus (Mouse).